The chain runs to 705 residues: MSTPSRPFRSPRRARWLVPVLLLLVWLVVGGALGPYAGKLGEVATNDQASFLPRSAESTRVVDAQQAFQQDETLPVIVVWTADGDGDAAVTAHQQAATRSVAGLEGDPGIVGPASPALPSDDGRALQAVVQVEPDLGERLPDVLADIGDAAGQVPGTRAQLAGPAASQADLSDAFAGIDGLLLAVALITVLVILLLVYRSVLLPLVIILSAVFALALSCAIVYALADRDVVRVDGQVQGILSILVIGAATDYALLLTARFREELARHPDRFGAVRAALRDSWGAVVASAATVALGLLALLLSDLTNNRALGPVGAIGIVCSVLSTLTFLPAVLVLLGRAAYWPAKPVRTGDPEAGHRLWHRVAALVDRAPRRIWALSLAALLACAAFAPTLSSKGVPLDEIFVNDTPSVAAQQTLAEHFPGGSGNPAVVIAEADRLDPVLRAARDTRGVASAAPVTDSGRPGAGTPLVVDGRVRIDATLEAPADSDAAKSTVVRLRAAVHEVSGADALVGGYTAQQYDTQETAAEDRTLIVPVVLAIILVILILLLRSLLMPVLLVATVALNFLATLGVSALVFTHVFGFSGTDASVPLYGFVFLVALGVDYNIFLMSRVREEALRHGVREGILRGLTATGGVITSAGVVLAATFAALGVIPLAFLLQIAFIVAFGVLLDTLVVRSLLVPALARDIGAVAWWPGRLGHRTPAGRD.

12 helical membrane-spanning segments follow: residues 16–36 (WLVP…LGPY), 177–197 (GIDG…LLLV), 202–222 (LLPL…CAIV), 237–257 (VQGI…LLLT), 281–301 (SWGA…ALLL), 316–336 (IGIV…LVLL), 373–393 (IWAL…TLSS), 529–549 (LIVP…LRSL), 554–574 (LLVA…ALVF), 587–607 (VPLY…IFLM), 627–647 (LTAT…TFAA), and 648–668 (LGVI…FGVL).

The protein belongs to the resistance-nodulation-cell division (RND) (TC 2.A.6) family. MmpL subfamily.

The protein localises to the cell membrane. This Streptomyces coelicolor (strain ATCC BAA-471 / A3(2) / M145) protein is Putative membrane protein SCO0839.